The primary structure comprises 100 residues: Urease subunit gamma (100 aa).

It belongs to the urease gamma subunit family. In terms of assembly, heterotrimer of UreA (gamma), UreB (beta) and UreC (alpha) subunits. Three heterotrimers associate to form the active enzyme.

It is found in the cytoplasm. The enzyme catalyses urea + 2 H2O + H(+) = hydrogencarbonate + 2 NH4(+). Its pathway is nitrogen metabolism; urea degradation; CO(2) and NH(3) from urea (urease route): step 1/1. The protein is Urease subunit gamma of Rhizobium rhizogenes (strain K84 / ATCC BAA-868) (Agrobacterium radiobacter).